Here is a 549-residue protein sequence, read N- to C-terminus: MRSDNIKKGINRTSHRSLLRACGLDDNDMKKPFIGIANSYTDIVPGHIHLKDLVQEVKEVIRLEGGVPFEFDTMAVCDGIAMNHEGMYYSLPSREIIANTVESMAMAHQFDALILMPTCDKVVPGMIMAAARLNIPAIVITGGPMMPGKFHGETVDFINVTEAVGATQSGKMSEEDLYELERCACPGAGSCAGLFTANTMACLTETMGMSLPGCATAHAVSDKKVEIARASAKKIFTLLENDIKPSDILTQEAFENAIKVDLALGGSTNTTLHIPAIANEVDGVDVTIDLFDKLSHEVPYICSIRPGGNNRMIDVENAGGIPAVMKNMESILNTDCITCTSNSVKENLEKVSDIDYNVIHTLDDPIRTEGGIAVLYGNVAPNGCVIKQGAVNEDMLVHSGPCKVFNSEEECVLAIENDEIIDGDVVVIRYEGPKGGPGMREMLNPTAAIMGRELFHVALITDGRFSGGSRGPCIGHISPEAAEGGPIGAIENGDIVSINVKERTIKLELTDDEIKERLSKVKPVERNLKGWLKQYQKLATSADKGAILK.

Aspartate 78 serves as a coordination point for Mg(2+). Position 119 (cysteine 119) interacts with [2Fe-2S] cluster. Residues aspartate 120 and lysine 121 each contribute to the Mg(2+) site. At lysine 121 the chain carries N6-carboxylysine. Cysteine 191 provides a ligand contact to [2Fe-2S] cluster. Glutamate 441 is a Mg(2+) binding site. The active-site Proton acceptor is the serine 466.

The protein belongs to the IlvD/Edd family. Homodimer. It depends on [2Fe-2S] cluster as a cofactor. The cofactor is Mg(2+).

It catalyses the reaction (2R)-2,3-dihydroxy-3-methylbutanoate = 3-methyl-2-oxobutanoate + H2O. It carries out the reaction (2R,3R)-2,3-dihydroxy-3-methylpentanoate = (S)-3-methyl-2-oxopentanoate + H2O. It functions in the pathway amino-acid biosynthesis; L-isoleucine biosynthesis; L-isoleucine from 2-oxobutanoate: step 3/4. The protein operates within amino-acid biosynthesis; L-valine biosynthesis; L-valine from pyruvate: step 3/4. Its function is as follows. Functions in the biosynthesis of branched-chain amino acids. Catalyzes the dehydration of (2R,3R)-2,3-dihydroxy-3-methylpentanoate (2,3-dihydroxy-3-methylvalerate) into 2-oxo-3-methylpentanoate (2-oxo-3-methylvalerate) and of (2R)-2,3-dihydroxy-3-methylbutanoate (2,3-dihydroxyisovalerate) into 2-oxo-3-methylbutanoate (2-oxoisovalerate), the penultimate precursor to L-isoleucine and L-valine, respectively. The polypeptide is Dihydroxy-acid dehydratase (Methanosphaera stadtmanae (strain ATCC 43021 / DSM 3091 / JCM 11832 / MCB-3)).